The following is a 159-amino-acid chain: Keratin-associated protein 11-1 (159 aa).

Repeat copies occupy residues 107–116 (CQPLSGVSTV), 117–126 (CKPVRSISTV), 127–136 (CQPVGGVSTI), and 137–146 (CQPTCGVSRT). The tract at residues 107-146 (CQPLSGVSTVCKPVRSISTVCQPVGGVSTICQPTCGVSRT) is 4 X 10 AA approximate repeats.

This sequence belongs to the PMG family. Wool.

In the wool cortex, wool keratin intermediate filaments are embedded in an interfilamentous matrix, consisting of wool keratin-associated proteins (KRTAP), which are essential for the formation of a rigid and resistant wool shaft through their extensive disulfide bond cross-linking with abundant cysteine residues of wool keratins. The matrix proteins include the high-sulfur and high-glycine-tyrosine keratins. The protein is Keratin-associated protein 11-1 (KRTAP11-1) of Capra hircus (Goat).